A 379-amino-acid polypeptide reads, in one-letter code: ORC1-type DNA replication protein 2 (379 aa).

ATP contacts are provided by residues 69–73, Tyr-211, and Arg-223; that span reads TGKTT.

Belongs to the CDC6/cdc18 family. As to quaternary structure, interacts with MCM. In terms of processing, autophosphorylated on a serine. Phosphorylation is inhibited by binding to MCM. Both single-stranded DNA and double-stranded DNA inhibit the phosphorylation reaction.

Its function is as follows. Involved in regulation of DNA replication. Dissociates the MCM complex and inhibits the MCM helicase activity, suggesting that it may function as a helicase loader. Binds to both specific and random double-stranded or single-stranded DNA. The polypeptide is ORC1-type DNA replication protein 2 (cdc6-2) (Methanothermobacter thermautotrophicus (strain ATCC 29096 / DSM 1053 / JCM 10044 / NBRC 100330 / Delta H) (Methanobacterium thermoautotrophicum)).